Consider the following 120-residue polypeptide: Large ribosomal subunit protein uL22 (120 aa).

This sequence belongs to the universal ribosomal protein uL22 family. Part of the 50S ribosomal subunit.

Functionally, this protein binds specifically to 23S rRNA; its binding is stimulated by other ribosomal proteins, e.g. L4, L17, and L20. It is important during the early stages of 50S assembly. It makes multiple contacts with different domains of the 23S rRNA in the assembled 50S subunit and ribosome. In terms of biological role, the globular domain of the protein is located near the polypeptide exit tunnel on the outside of the subunit, while an extended beta-hairpin is found that lines the wall of the exit tunnel in the center of the 70S ribosome. This is Large ribosomal subunit protein uL22 from Acaryochloris marina (strain MBIC 11017).